Here is an 876-residue protein sequence, read N- to C-terminus: Aspartate--tRNA(Asp/Asn) ligase (876 aa).

Residues methionine 1 to phenylalanine 278 form a unknown region. Residues methionine 279 to glycine 876 are aspartyl-tRNA synthetase. Glutamate 453 serves as a coordination point for L-aspartate. The aspartate stretch occupies residues glutamine 477 to lysine 480. L-aspartate contacts are provided by arginine 499 and histidine 729. Arginine 499–glutamate 501 contributes to the ATP binding site. Glutamate 763 provides a ligand contact to ATP. Arginine 770 is an L-aspartate binding site. Position 815–818 (glycine 815–arginine 818) interacts with ATP.

The protein belongs to the class-II aminoacyl-tRNA synthetase family. Type 1 subfamily. In terms of assembly, homodimer.

Its subcellular location is the cytoplasm. The enzyme catalyses tRNA(Asx) + L-aspartate + ATP = L-aspartyl-tRNA(Asx) + AMP + diphosphate. In terms of biological role, aspartyl-tRNA synthetase with relaxed tRNA specificity since it is able to aspartylate not only its cognate tRNA(Asp) but also tRNA(Asn). Reaction proceeds in two steps: L-aspartate is first activated by ATP to form Asp-AMP and then transferred to the acceptor end of tRNA(Asp/Asn). The polypeptide is Aspartate--tRNA(Asp/Asn) ligase (aspS) (Paramagnetospirillum magneticum (strain ATCC 700264 / AMB-1) (Magnetospirillum magneticum)).